Here is a 586-residue protein sequence, read N- to C-terminus: MKENETLKQIVLKSLEEGVDSLIVSFPDVEKSSLRIKIEYSRDEKFGDYSTSFSLENSKLLKRNPIQVSKELVEILQKRTDLFEKVDFTPPGFVNFKISPSYLLEYIEKSILSGDHFPKVEHPLKINLEFVSANPTGPLNIVSARAAANGDTMASLLKAIGHNVDKEFYINDYGNQVFLLGVSTLVRIREIKGEFSTRQEADDTTPIDTILEKNILPAEGYRGEYIKDIANALLNEPKKSSQIETLLKEKKYRELAELCSIWTVENNLDWQRKDLDSFGVEFDNYFRERTLHESDKVLAVMKDLERVGKIFEEDGKKIFRSTEYGDDKDRVVVRDDGRPTYLLADIAYHKDKIERGYDRIYDIWGPDHHGYISRLSGAVQTLGYKKENFKVIISQQVNLLESGQKVKMSKRAGSFQTMSDLIGFLGKHGKDVGRYFFVMRSLDAPLDFDLDLAQDQSDKNPVFYLQYAHARICSIFREVGTESSAEAAESLEMSEERKRLLFWIARFPEEIFDSANSMEPHRVANYLQSFAKAFTGFYLGKNNRLKDATPEVRLGLARICLAARSVLAEGLGLIGVSAPEKMEKES.

The 'HIGH' region motif lies at 133-143; sequence ANPTGPLNIVS.

Belongs to the class-I aminoacyl-tRNA synthetase family. Monomer.

The protein localises to the cytoplasm. The catalysed reaction is tRNA(Arg) + L-arginine + ATP = L-arginyl-tRNA(Arg) + AMP + diphosphate. In Leptospira borgpetersenii serovar Hardjo-bovis (strain JB197), this protein is Arginine--tRNA ligase.